The sequence spans 888 residues: Alanine--tRNA ligase (888 aa).

Positions 573, 577, 676, and 680 each coordinate Zn(2+).

The protein belongs to the class-II aminoacyl-tRNA synthetase family. Requires Zn(2+) as cofactor.

It localises to the cytoplasm. It carries out the reaction tRNA(Ala) + L-alanine + ATP = L-alanyl-tRNA(Ala) + AMP + diphosphate. Its function is as follows. Catalyzes the attachment of alanine to tRNA(Ala) in a two-step reaction: alanine is first activated by ATP to form Ala-AMP and then transferred to the acceptor end of tRNA(Ala). Also edits incorrectly charged Ser-tRNA(Ala) and Gly-tRNA(Ala) via its editing domain. The sequence is that of Alanine--tRNA ligase from Corynebacterium glutamicum (strain R).